The primary structure comprises 339 residues: Phenylalanine--tRNA ligase alpha subunit (339 aa).

Residue Glu-250 coordinates Mg(2+).

The protein belongs to the class-II aminoacyl-tRNA synthetase family. Phe-tRNA synthetase alpha subunit type 1 subfamily. In terms of assembly, tetramer of two alpha and two beta subunits. It depends on Mg(2+) as a cofactor.

The protein localises to the cytoplasm. The catalysed reaction is tRNA(Phe) + L-phenylalanine + ATP = L-phenylalanyl-tRNA(Phe) + AMP + diphosphate + H(+). The polypeptide is Phenylalanine--tRNA ligase alpha subunit (Christiangramia forsetii (strain DSM 17595 / CGMCC 1.15422 / KT0803) (Gramella forsetii)).